The sequence spans 598 residues: UvrABC system protein C (598 aa).

A GIY-YIG domain is found at 14 to 91 (DSPGCYLHKD…IQKNMPKYNI (78 aa)). The 36-residue stretch at 196-231 (DKIIEDLRSKMLAASKEMAFERAAEYRDLISGIATM) folds into the UVR domain.

This sequence belongs to the UvrC family. As to quaternary structure, interacts with UvrB in an incision complex.

It is found in the cytoplasm. Functionally, the UvrABC repair system catalyzes the recognition and processing of DNA lesions. UvrC both incises the 5' and 3' sides of the lesion. The N-terminal half is responsible for the 3' incision and the C-terminal half is responsible for the 5' incision. This chain is UvrABC system protein C, found in Streptococcus pyogenes serotype M1.